Reading from the N-terminus, the 247-residue chain is Adenosylcobinamide-GDP ribazoletransferase (247 aa).

Helical transmembrane passes span 34 to 54 (IVMFPFIGLILGGVSGLIFIL), 59 to 79 (CGIPLAALFCILALALLTGGF), 113 to 133 (GGLALIFVLLAKILVVSELAL), 138 to 158 (MLAALAAACAAGRGSAVLLMY), 171 to 191 (VFIGKVSGRQTCITLGLAVIV), and 194 to 214 (VLLPGMQGLAAMVVTLAAIFI).

The protein belongs to the CobS family. It depends on Mg(2+) as a cofactor.

It is found in the cell inner membrane. It catalyses the reaction alpha-ribazole + adenosylcob(III)inamide-GDP = adenosylcob(III)alamin + GMP + H(+). The enzyme catalyses alpha-ribazole 5'-phosphate + adenosylcob(III)inamide-GDP = adenosylcob(III)alamin 5'-phosphate + GMP + H(+). Its pathway is cofactor biosynthesis; adenosylcobalamin biosynthesis; adenosylcobalamin from cob(II)yrinate a,c-diamide: step 7/7. In terms of biological role, joins adenosylcobinamide-GDP and alpha-ribazole to generate adenosylcobalamin (Ado-cobalamin). Also synthesizes adenosylcobalamin 5'-phosphate from adenosylcobinamide-GDP and alpha-ribazole 5'-phosphate. In Salmonella schwarzengrund (strain CVM19633), this protein is Adenosylcobinamide-GDP ribazoletransferase.